The following is a 706-amino-acid chain: Drebrin (706 aa).

The residue at position 2 (A2) is an N-acetylalanine. In terms of domain architecture, ADF-H spans 3 to 134 (GVSFSGHRLE…DAGAIGQRLS (132 aa)). 2 positions are modified to phosphoserine: S141 and S142. A compositionally biased stretch (basic and acidic residues) spans 209 to 236 (ERMEQERQEQEERERRYREREQQIEEHR). Positions 209–497 (ERMEQERQEQ…AEPAASVTSV (289 aa)) are disordered. At S241 the chain carries Phosphoserine. Over residues 288–298 (DNPREFFRQQE) the composition is skewed to basic and acidic residues. The span at 331–345 (SDSGPSSSSSSSSSP) shows a compositional bias: low complexity. At S344 the chain carries Phosphoserine. Over residues 357-366 (RTPNLSSSLP) the composition is skewed to polar residues. A phosphothreonine mark is found at T379 and T383. A compositionally biased stretch (polar residues) spans 382-396 (PTRSPSDSSTASTPI). A phosphoserine mark is found at S385, S387, and S393. Residue T394 is modified to Phosphothreonine. Over residues 411 to 422 (QPPPPPPPPPPT) the composition is skewed to pro residues. Low complexity predominate over residues 453–497 (AAEPPQAQEPPLLQSSPLEDSMCTESPEQAALAAPAEPAASVTSV). Position 468 is a phosphoserine (S468). Residue T550 is modified to Phosphothreonine. The disordered stretch occupies residues 633–677 (EPHLLTNGETTQKEGTQASEGYFSQSQEEEFAQSEEPCAKVPPPV). A compositionally biased stretch (polar residues) spans 639-651 (NGETTQKEGTQAS). S658 carries the phosphoserine modification.

In terms of assembly, interacts with RUFY3. Interacts with CXCR4; this interaction is enhanced by antigenic stimulation. Interacts (via ADF-H domain) with ZMYND8 (via N-terminus); the interaction leads to sequestering of ZMYND8 in the cytoplasm. As to expression, expressed in the hippocampus, with expression in the pyramidal cells of CA1, CA2 and CA3 and in the granule cells of the dentate gyrus (at protein level). Highly expressed in brain, also present in stomach and to a lesser degree in kidney, colon, and urinary bladder. The E2 isoform is specifically expressed in adult stomach, kidney, and cultured cells.

The protein resides in the cytoplasm. It localises to the cell projection. It is found in the dendrite. The protein localises to the cell cortex. Its subcellular location is the cell junction. The protein resides in the growth cone. Functionally, actin cytoskeleton-organizing protein that plays a role in the formation of cell projections. Required for actin polymerization at immunological synapses (IS) and for the recruitment of the chemokine receptor CXCR4 to IS. Plays a role in dendritic spine morphogenesis and organization, including the localization of the dopamine receptor DRD1 to the dendritic spines. Involved in memory-related synaptic plasticity in the hippocampus. This Mus musculus (Mouse) protein is Drebrin (Dbn1).